The following is a 95-amino-acid chain: Small ribosomal subunit protein uS19 (95 aa).

It belongs to the universal ribosomal protein uS19 family.

Its function is as follows. Protein S19 forms a complex with S13 that binds strongly to the 16S ribosomal RNA. The sequence is that of Small ribosomal subunit protein uS19 from Bdellovibrio bacteriovorus (strain ATCC 15356 / DSM 50701 / NCIMB 9529 / HD100).